The sequence spans 216 residues: Protein Syd (216 aa).

Belongs to the Syd family.

Its subcellular location is the cell inner membrane. Functionally, interacts with the SecY protein in vivo. May bind preferentially to an uncomplexed state of SecY, thus functioning either as a chelating agent for excess SecY in the cell or as a regulatory factor that negatively controls the translocase function. This is Protein Syd from Shewanella baltica (strain OS155 / ATCC BAA-1091).